A 1059-amino-acid chain; its full sequence is Carbamoyl phosphate synthase large chain (1059 aa).

The segment at 1 to 401 is carboxyphosphate synthetic domain; it reads MPKRQDISKI…AMLKAVRSLE (401 aa). ATP contacts are provided by Arg129, Arg169, Gly175, Gly176, Arg208, Ile210, Glu215, Gly241, Ile242, His243, Gln284, and Glu298. Residues 133–327 enclose the ATP-grasp 1 domain; it reads KALMERLNEP…IAKMAAKIAV (195 aa). The Mg(2+) site is built by Gln284, Glu298, and Asn300. Residues Gln284, Glu298, and Asn300 each coordinate Mn(2+). An oligomerization domain region spans residues 402-546; the sequence is IGAIGLDDIT…YATYEQENES (145 aa). The carbamoyl phosphate synthetic domain stretch occupies residues 547 to 929; it reads IISTKKSVLV…ALYKAFIASN (383 aa). One can recognise an ATP-grasp 2 domain in the interval 671–861; sequence DQVIKELALP…LAQLATRVML (191 aa). Arg707, Ser746, Leu748, Glu752, Gly777, Val778, His779, Ser780, Gln820, and Glu832 together coordinate ATP. Mg(2+) is bound by residues Gln820, Glu832, and Asn834. 3 residues coordinate Mn(2+): Gln820, Glu832, and Asn834. In terms of domain architecture, MGS-like spans 930–1059; it reads IKVPRYGNVL…SRSFTVKEMH (130 aa). The interval 930–1059 is allosteric domain; it reads IKVPRYGNVL…SRSFTVKEMH (130 aa).

This sequence belongs to the CarB family. As to quaternary structure, composed of two chains; the small (or glutamine) chain promotes the hydrolysis of glutamine to ammonia, which is used by the large (or ammonia) chain to synthesize carbamoyl phosphate. Tetramer of heterodimers (alpha,beta)4. Mg(2+) serves as cofactor. Mn(2+) is required as a cofactor.

It catalyses the reaction hydrogencarbonate + L-glutamine + 2 ATP + H2O = carbamoyl phosphate + L-glutamate + 2 ADP + phosphate + 2 H(+). The catalysed reaction is hydrogencarbonate + NH4(+) + 2 ATP = carbamoyl phosphate + 2 ADP + phosphate + 2 H(+). It participates in amino-acid biosynthesis; L-arginine biosynthesis; carbamoyl phosphate from bicarbonate: step 1/1. It functions in the pathway pyrimidine metabolism; UMP biosynthesis via de novo pathway; (S)-dihydroorotate from bicarbonate: step 1/3. Functionally, large subunit of the glutamine-dependent carbamoyl phosphate synthetase (CPSase). CPSase catalyzes the formation of carbamoyl phosphate from the ammonia moiety of glutamine, carbonate, and phosphate donated by ATP, constituting the first step of 2 biosynthetic pathways, one leading to arginine and/or urea and the other to pyrimidine nucleotides. The large subunit (synthetase) binds the substrates ammonia (free or transferred from glutamine from the small subunit), hydrogencarbonate and ATP and carries out an ATP-coupled ligase reaction, activating hydrogencarbonate by forming carboxy phosphate which reacts with ammonia to form carbamoyl phosphate. The protein is Carbamoyl phosphate synthase large chain of Leuconostoc mesenteroides subsp. mesenteroides (strain ATCC 8293 / DSM 20343 / BCRC 11652 / CCM 1803 / JCM 6124 / NCDO 523 / NBRC 100496 / NCIMB 8023 / NCTC 12954 / NRRL B-1118 / 37Y).